The following is a 441-amino-acid chain: Serum response factor-binding protein 1 (441 aa).

Coiled coils occupy residues 52 to 77 (KGTE…AMKE) and 118 to 140 (LLKK…RQSA). 3 disordered regions span residues 137 to 342 (RQSA…RNDK), 357 to 389 (FHSL…EPPV), and 406 to 441 (QTMQ…TFDD). Low complexity predominate over residues 139–152 (SAPAAESSESTSGE). The span at 153 to 183 (GRCKDIARSKDDARESQHPERTVVREQKAKD) shows a compositional bias: basic and acidic residues. Lys-201 participates in a covalent cross-link: Glycyl lysine isopeptide (Lys-Gly) (interchain with G-Cter in SUMO2). Ser-214 carries the phosphoserine modification. Residues 237 to 246 (DSNQGKASTK) are compositionally biased toward polar residues. Residues 269–282 (EKEYFDDSTEERFY) show a composition bias toward basic and acidic residues. Residues Ser-276, Ser-291, and Ser-293 each carry the phosphoserine modification. Over residues 308-321 (KESGVHSSAKELKP) the composition is skewed to basic and acidic residues. Residue Lys-328 forms a Glycyl lysine isopeptide (Lys-Gly) (interchain with G-Cter in SUMO2) linkage. Residues 366–381 (SRRDPREQAPKNKAPD) show a composition bias toward basic and acidic residues.

In terms of assembly, interacts with SRF. Forms complexes with SRF and SRF cofactors ARID2, MYOCD and NKX2-5. Interacts with the N-terminus of SLC2A4. As to expression, highly expressed in heart, skeletal muscle, liver, kidney, testis and brain. Also expressed in white adipose tissue. Expression is up-regulated in cardiomyopathic heart.

It localises to the cytoplasm. It is found in the perinuclear region. Its function is as follows. May be involved in regulating transcriptional activation of cardiac genes during the aging process. May play a role in biosynthesis and/or processing of SLC2A4 in adipose cells. This Mus musculus (Mouse) protein is Serum response factor-binding protein 1.